A 593-amino-acid polypeptide reads, in one-letter code: CTD kinase subunit alpha (593 aa).

Composition is skewed to polar residues over residues 1 to 17 (MSYSKSTIYRRQGTEPN) and 29 to 51 (QLSGTNEESLGGHTLSSNAFKNN). The tract at residues 1 to 262 (MSYSKSTIYR…ESVPAPLPSP (262 aa)) is disordered. Phosphoserine occurs at positions 56 and 58. The span at 90–103 (RSRKSRRRKGKKAF) shows a compositional bias: basic residues. Phosphoserine occurs at positions 104 and 109. The span at 139–152 (SSSSASVSPISPSA) shows a compositional bias: low complexity. The span at 160–170 (QASSFRRSPPS) shows a compositional bias: polar residues. Low complexity predominate over residues 198-215 (IPHETTSSDTQKKSSVSS). The region spanning 277 to 561 (YEKIDQIGEG…AHETLMHEYF (285 aa)) is the Protein kinase domain. ATP is bound by residues 283–291 (IGEGTYGKV) and lysine 306. Aspartate 399 serves as the catalytic Proton acceptor.

The protein belongs to the protein kinase superfamily. CMGC Ser/Thr protein kinase family. CDC2/CDKX subfamily. As to quaternary structure, CTDK-I consists of three subunits, ctk1/lsk1, ctk2/lsc1 and ctk3 (also called alpha, beta and gamma). Interacts with ctk2/lsc1. This interaction is dependent on kinase activity.

The protein resides in the nucleus. It is found in the nucleolus. The catalysed reaction is [DNA-directed RNA polymerase] + ATP = phospho-[DNA-directed RNA polymerase] + ADP + H(+). Its function is as follows. Catalytic subunit of the CTDK-I complex, which hyperphosphorylates the C-terminal heptapeptide repeat domain (CTD) of the largest RNA polymerase II subunit. Involved in RNA polymerase II transcriptional elongation and pre-mRNA 3'-end processing. Together with ctk2/lsc1, required for the regulation of cytokinesis by phosphorylating 'Ser-2' residues found in the heptad repeats of the CTD. Required for nuclear localization of ctk2/lsc1. Positively regulates the septation initiation network (SIN) and promotes successful completion of cytokinesis in response to perturbation of the actomyosin ring. Acts in parallel to clp1 to promote actomyosin ring stability upon cytokinesis checkpoint activation. The protein is CTD kinase subunit alpha of Schizosaccharomyces pombe (strain 972 / ATCC 24843) (Fission yeast).